The sequence spans 357 residues: Outer membrane porin protein OmpD (357 aa).

The N-terminal stretch at 1–21 (MKLKLVAVAVTTLLAAGAVNA) is a signal peptide.

It belongs to the Gram-negative porin family. Homotrimer.

The protein localises to the cell outer membrane. Its function is as follows. Forms pores that allow passive diffusion of small molecules across the outer membrane. This is Outer membrane porin protein OmpD (ompD) from Citrobacter koseri (strain ATCC BAA-895 / CDC 4225-83 / SGSC4696).